The sequence spans 277 residues: Radial spoke head protein 9 homolog (277 aa).

Belongs to the flagellar radial spoke RSP9 family. Component of axonemal radial spoke complexes.

It is found in the cytoplasm. It localises to the cytoskeleton. The protein localises to the cilium axoneme. Its subcellular location is the flagellum axoneme. The protein resides in the cell projection. It is found in the kinocilium. In terms of biological role, functions as part of axonemal radial spoke complexes that play an important part in the motility of sperm and cilia. Essential for both the radial spoke head assembly and the central pair microtubule stability in ependymal motile cilia. Required for motility of olfactory and neural cilia and for the structural integrity of ciliary axonemes in both 9+0 and 9+2 motile cilia. This Xenopus tropicalis (Western clawed frog) protein is Radial spoke head protein 9 homolog (rsph9).